Consider the following 456-residue polypeptide: Anthocyanidin 3-O-glucosyltransferase UFGT (456 aa).

Serine 18 is a kaempferol binding site. Position 18 (serine 18) interacts with quercetin. A UDP-binding site is contributed by threonine 19. UDP-alpha-D-glucose is bound at residue threonine 19. Kaempferol-binding residues include histidine 20 and glutamine 84. Catalysis depends on histidine 20, which acts as the Proton acceptor. Residue glutamine 84 participates in quercetin binding. Residue aspartate 119 is the Charge relay of the active site. Threonine 141 is a UDP-alpha-D-glucose binding site. Kaempferol contacts are provided by histidine 150 and glutamine 188. Quercetin contacts are provided by histidine 150 and glutamine 188. UDP-binding residues include threonine 280, serine 306, tryptophan 332, alanine 333, and histidine 350. UDP-alpha-D-glucose-binding residues include threonine 280, serine 306, tryptophan 332, alanine 333, histidine 350, tryptophan 353, asparagine 354, serine 355, and glutamate 358. Asparagine 354, serine 355, and glutamate 358 together coordinate UDP. Residue glycine 373 participates in quercetin binding. Aspartate 374 and glutamine 375 together coordinate UDP-alpha-D-glucose.

This sequence belongs to the UDP-glycosyltransferase family. In terms of tissue distribution, detected only in berry skin.

It catalyses the reaction an anthocyanidin + UDP-alpha-D-glucose + H(+) = an anthocyanidin 3-O-beta-D-glucoside + UDP. The enzyme catalyses cyanidin + UDP-alpha-D-glucose = cyanidin 3-O-beta-D-glucoside + UDP + H(+). The catalysed reaction is delphinidin + UDP-alpha-D-glucose = delphinidin 3-O-beta-D-glucoside + UDP. It carries out the reaction peonidin + UDP-alpha-D-glucose = peonidin 3-O-beta-D-glucoside + UDP. It catalyses the reaction pelargonidin + UDP-alpha-D-glucose = pelargonidin 3-O-beta-D-glucoside + UDP. The enzyme catalyses malvidin + UDP-alpha-D-glucose = malvidin 3-O-beta-D-glucoside + UDP. The catalysed reaction is a flavonol + UDP-alpha-D-glucose = a flavonol 3-O-beta-D-glucoside + UDP + H(+). Its pathway is pigment biosynthesis; anthocyanin biosynthesis. Inhibited by Mn(2+) and Zn(2+). In terms of biological role, in the presence of other necessary color factors, this glycosylation reaction allows the accumulation of anthocyanin pigments. Involved in the formation of red wine pigments. UDP-glucose (UDP-Glc) is the physiological sugar donor, and cyanidin is the natural acceptor in vivo. Can glucosylate the anthocyanidins delphinidin, peonidin, pelargonidin and malvidin. The flavonols quercitin and kaempferol can also be glucosylated in vitro, but with glucosylation rates 50-100 times lower than cyanidin. In vitro, can use UDP-Glc, UDP-5SGlc, UDP-Xyl, UDP-Man, UDP-Gal, UDP-GlcNAc, GDP-Glc, dTDP-Glc and dTDP-Xyl as sugar donors, but not UDP-6OMeGal, UDP-Ara, UDP-6FGal, UDP-GlcN, UDP-2FGal, UDP-5SAra, GDP-Man, GDP-Fuc, UDP-Fuc or UDP-Rha. The chain is Anthocyanidin 3-O-glucosyltransferase UFGT from Vitis vinifera (Grape).